The primary structure comprises 146 residues: D-aminoacyl-tRNA deacylase (146 aa).

Positions 138-139 (GP) match the Gly-cisPro motif, important for rejection of L-amino acids motif.

This sequence belongs to the DTD family. In terms of assembly, homodimer.

The protein localises to the cytoplasm. The enzyme catalyses glycyl-tRNA(Ala) + H2O = tRNA(Ala) + glycine + H(+). It catalyses the reaction a D-aminoacyl-tRNA + H2O = a tRNA + a D-alpha-amino acid + H(+). Functionally, an aminoacyl-tRNA editing enzyme that deacylates mischarged D-aminoacyl-tRNAs. Also deacylates mischarged glycyl-tRNA(Ala), protecting cells against glycine mischarging by AlaRS. Acts via tRNA-based rather than protein-based catalysis; rejects L-amino acids rather than detecting D-amino acids in the active site. By recycling D-aminoacyl-tRNA to D-amino acids and free tRNA molecules, this enzyme counteracts the toxicity associated with the formation of D-aminoacyl-tRNA entities in vivo and helps enforce protein L-homochirality. This chain is D-aminoacyl-tRNA deacylase, found in Stenotrophomonas maltophilia (strain K279a).